A 297-amino-acid polypeptide reads, in one-letter code: MKKAEGTIISAISGYYDVEIDNKVVRTRARGVFRDRKQKPLVGDRVVVQLDDQGMNYLIEILPRINEIGRPAVANVSRVLLVISAVEPDFSLELLDRYLTFFAWKNVGVVIYLSKSDITSSERLKDIQTELEYYQRIGYPVFEDAEKLENELPKMIDKDQIWTLAGQSGAGKSTLLNQLESEAKQVTGAISTALNRGKHTTRQVTLFKYGSGFIADTPGFSAIDLFKIKVDDLRNYFYDLKEASANCKFRGCQHIKEPGCEVKKLVEEGKIARSRYESYLKIRQEISDNRMPEYLKK.

One can recognise a CP-type G domain in the interval 65 to 223 (INEIGRPAVA…IADTPGFSAI (159 aa)). Residues 114-117 (SKSD) and 166-174 (GQSGAGKST) each bind GTP. Residues Cys-247, Cys-252, His-254, and Cys-260 each coordinate Zn(2+).

The protein belongs to the TRAFAC class YlqF/YawG GTPase family. RsgA subfamily. In terms of assembly, monomer. Associates with 30S ribosomal subunit, binds 16S rRNA. Zn(2+) serves as cofactor.

The protein localises to the cytoplasm. Its function is as follows. One of several proteins that assist in the late maturation steps of the functional core of the 30S ribosomal subunit. Helps release RbfA from mature subunits. May play a role in the assembly of ribosomal proteins into the subunit. Circularly permuted GTPase that catalyzes slow GTP hydrolysis, GTPase activity is stimulated by the 30S ribosomal subunit. The chain is Small ribosomal subunit biogenesis GTPase RsgA from Lactobacillus johnsonii (strain CNCM I-12250 / La1 / NCC 533).